The sequence spans 391 residues: Argininosuccinate synthase (391 aa).

6–14 serves as a coordination point for ATP; that stretch reads AYSGGLDTT. Y84 is an L-citrulline binding site. G114 provides a ligand contact to ATP. 3 residues coordinate L-aspartate: T116, N120, and D121. Residue N120 participates in L-citrulline binding. 5 residues coordinate L-citrulline: R124, S171, S180, E253, and Y265.

The protein belongs to the argininosuccinate synthase family. Type 1 subfamily. Homotetramer.

It is found in the cytoplasm. It catalyses the reaction L-citrulline + L-aspartate + ATP = 2-(N(omega)-L-arginino)succinate + AMP + diphosphate + H(+). It participates in amino-acid biosynthesis; L-arginine biosynthesis; L-arginine from L-ornithine and carbamoyl phosphate: step 2/3. This chain is Argininosuccinate synthase, found in Metallosphaera sedula (strain ATCC 51363 / DSM 5348 / JCM 9185 / NBRC 15509 / TH2).